The chain runs to 926 residues: Storkhead-box protein 2 (926 aa).

Disordered stretches follow at residues 1–32, 338–393, 452–529, 564–586, 633–693, 723–802, and 823–926; these read MKKT…RSEK, EEEK…DIPG, EMPF…SYID, KEPS…PSYG, VKKL…SLDK, LLKS…VGTM, and TLLT…VTSV. Positions 18 to 32 are enriched in basic and acidic residues; that stretch reads FSDRASDRMRSRSEK. Positions 353–378 are enriched in basic residues; sequence HSGRSKKSRTHRKSHGKSRSHSKTRV. Residues 379–393 are compositionally biased toward basic and acidic residues; sequence SKGDPSDGSHLDIPG. A compositionally biased stretch (basic residues) spans 463–472; it reads SHSKVHRSHS. The span at 473–495 shows a compositional bias: basic and acidic residues; it reads HTQDRRSRNERSNKAKERSRSMD. Over residues 518 to 529 the composition is skewed to polar residues; that stretch reads QDDQTPSQSYID. Basic and acidic residues-rich tracts occupy residues 633 to 658 and 684 to 693; these read VKKL…EESP and HSAEPSSLDK. Positions 746-769 are enriched in polar residues; that stretch reads LGTSAAQAMPPSQRQQEPGGNQEA. The segment covering 785 to 799 has biased composition (basic and acidic residues); sequence GANKNAEEEKNRDDV. Polar residues-rich tracts occupy residues 847–884 and 914–926; these read MDSS…QNPA and KPSN…VTSV.

The chain is Storkhead-box protein 2 (Stox2) from Mus musculus (Mouse).